Reading from the N-terminus, the 217-residue chain is Small ribosomal subunit protein uS3 (217 aa).

The KH type-2 domain occupies 40-110 (IRDLINKWFN…EVYINIHEVR (71 aa)).

This sequence belongs to the universal ribosomal protein uS3 family. As to quaternary structure, part of the 30S ribosomal subunit. Forms a tight complex with proteins S10 and S14.

Binds the lower part of the 30S subunit head. Binds mRNA in the 70S ribosome, positioning it for translation. The polypeptide is Small ribosomal subunit protein uS3 (Rickettsia typhi (strain ATCC VR-144 / Wilmington)).